The following is a 536-amino-acid chain: Cytochrome P450 monooxygenase macC (536 aa).

The chain crosses the membrane as a helical span at residues 2–22 (ALLYITTAALALLLLFLRAVF). Cys-448 serves as a coordination point for heme.

The protein belongs to the cytochrome P450 family. Requires heme as cofactor.

Its subcellular location is the membrane. It participates in secondary metabolite biosynthesis; terpenoid biosynthesis. Cytochrome P450 monooxygenase; part of the gene cluster that mediates the biosynthesis of macrophorins, isoprenoid epoxycyclohexenones containing cyclized drimane moieties. The first step of the pathway is the synthesis of 6-methylsalicylic acid (6-MSA) by the polyketide synthase macA. 6-MSA is then converted to m-cresol by the decarboxylase macB. The cytochrome P450 monooxygenase macC then catalyzes the oxidation of m-cresol to toluquinol. Epoxidation of toluquinol is then performed by the short chain dehydrogenase macD, with the help of macE, and a further prenylation by macG leads to 7-deacetoxyyanuthone A. The next step is the hydroxylation of C-22 of 7-deacetoxyyanuthone A by the cytochrome P450 monooxygenase macH to yield 22-deacetylyanuthone A. O-Mevalon transferase macI then attaches mevalon to the hydroxyl group of 22-deacetylyanuthone A to produce yanuthone E. The terpene cyclase macJ catalyzes the cyclization of 22-deacetylyanuthone A to macrophorin A. MacJ is also able to catalyze cyclization of yanuthone E and 7-deacetoxyyanuthone A to their corresponding macrophorins. The macJ products can be further modified by macH and macJ, as well as by the FAD-dependent monooxygenase macF, to produce additional macrophorins, including 4'-oxomacrophorin A, 4'-oxomacrophorin D and 4'-oxomacrophorin E. The protein is Cytochrome P450 monooxygenase macC of Penicillium terrestre.